The primary structure comprises 367 residues: Cellular tumor antigen p53 (367 aa).

The segment at 1–30 (MAEEMEPLLEPTEVFMDLWSMLPYSMQQLP) is transcription activation (acidic). Residues 30–84 (PLPEDHSNWQELSPLEPSDPPPPPPPPPLPLAAAAPPPLNPPTPPRAAPSPVVPS) form a disordered region. The segment covering 46–81 (PSDPPPPPPPPPLPLAAAAPPPLNPPTPPRAAPSPV) has biased composition (pro residues). Residues 87 to 278 (DYGGDFDFRV…KIEEENFRKR (192 aa)) mediate DNA binding. The Zn(2+) site is built by C161, H164, C224, and C228. The tract at residues 259-266 (RVCACPGR) is interaction with DNA. Disordered regions lie at residues 275 to 303 (FRKR…KKRV) and 333 to 367 (LAEG…KGSD). A Bipartite nuclear localization signal motif is present at residues 286–302 (KRAMSPPTEAPEPPKKR). The oligomerization stretch occupies residues 308 to 339 (NEIFYLQVRGRRRYEMLKEINEALQLAEGGSA). The Nuclear export signal signature appears at 322–333 (EMLKEINEALQL). The interval 347–364 (RVKVEGPQPSCGKKLLQK) is basic (repression of DNA-binding).

The protein belongs to the p53 family. As to quaternary structure, binds DNA as a homotetramer. The cofactor is Zn(2+).

Its subcellular location is the cytoplasm. It localises to the nucleus. Multifunctional transcription factor that induces cell cycle arrest, DNA repair or apoptosis upon binding to its target DNA sequence. Acts as a tumor suppressor in many tumor types; induces growth arrest or apoptosis depending on the physiological circumstances and cell type. Negatively regulates cell division by controlling expression of a set of genes required for this process. One of the activated genes is an inhibitor of cyclin-dependent kinases. Apoptosis induction seems to be mediated either by stimulation of BAX and FAS antigen expression, or by repression of Bcl-2 expression. In Gallus gallus (Chicken), this protein is Cellular tumor antigen p53 (TP53).